The sequence spans 459 residues: Light-independent protochlorophyllide reductase subunit N (459 aa).

[4Fe-4S] cluster is bound by residues Cys-22, Cys-47, and Cys-107.

It belongs to the BchN/ChlN family. As to quaternary structure, protochlorophyllide reductase is composed of three subunits; ChlL, ChlN and ChlB. Forms a heterotetramer of two ChlB and two ChlN subunits. It depends on [4Fe-4S] cluster as a cofactor.

The protein resides in the plastid. The protein localises to the chloroplast. The enzyme catalyses chlorophyllide a + oxidized 2[4Fe-4S]-[ferredoxin] + 2 ADP + 2 phosphate = protochlorophyllide a + reduced 2[4Fe-4S]-[ferredoxin] + 2 ATP + 2 H2O. It participates in porphyrin-containing compound metabolism; chlorophyll biosynthesis (light-independent). Functionally, component of the dark-operative protochlorophyllide reductase (DPOR) that uses Mg-ATP and reduced ferredoxin to reduce ring D of protochlorophyllide (Pchlide) to form chlorophyllide a (Chlide). This reaction is light-independent. The NB-protein (ChlN-ChlB) is the catalytic component of the complex. The protein is Light-independent protochlorophyllide reductase subunit N of Pinus contorta (Shore pine).